Consider the following 75-residue polypeptide: uncharacterized protein (75 aa).

Residues 19–38 (FHNTAPSKTNVNVPRANKSQ) are compositionally biased toward polar residues. Residues 19–42 (FHNTAPSKTNVNVPRANKSQSKGK) form a disordered region. The chain crosses the membrane as a helical span at residues 47-66 (LLVLVGTLALVTSVISVNYQ).

The protein localises to the membrane. This is an uncharacterized protein from Saccharomyces cerevisiae (strain ATCC 204508 / S288c) (Baker's yeast).